We begin with the raw amino-acid sequence, 435 residues long: Adenylosuccinate synthetase (435 aa).

GTP is bound by residues 17–23 (GDEGKGK) and 45–47 (GHT). Residue aspartate 18 is the Proton acceptor of the active site. Mg(2+) contacts are provided by aspartate 18 and glycine 45. Residues 18-21 (DEGK), 43-46 (NAGH), threonine 135, arginine 149, glutamine 230, threonine 245, and arginine 309 each bind IMP. Histidine 46 serves as the catalytic Proton donor. 305 to 311 (TVSGRAR) contributes to the substrate binding site. Residues arginine 311, 337-339 (LLD), and 419-421 (SVG) contribute to the GTP site.

Belongs to the adenylosuccinate synthetase family. Homodimer. Mg(2+) is required as a cofactor.

The protein localises to the cytoplasm. The enzyme catalyses IMP + L-aspartate + GTP = N(6)-(1,2-dicarboxyethyl)-AMP + GDP + phosphate + 2 H(+). The protein operates within purine metabolism; AMP biosynthesis via de novo pathway; AMP from IMP: step 1/2. Plays an important role in the de novo pathway of purine nucleotide biosynthesis. Catalyzes the first committed step in the biosynthesis of AMP from IMP. The sequence is that of Adenylosuccinate synthetase from Spiroplasma citri.